The chain runs to 138 residues: Acidic phospholipase A2 beta (138 aa).

The signal sequence occupies residues 1 to 16 (MRTLWIVAVLLLGVEG). 7 disulfides stabilise this stretch: Cys42-Cys131, Cys44-Cys60, Cys59-Cys111, Cys65-Cys138, Cys66-Cys104, Cys73-Cys97, and Cys91-Cys102. Residues Tyr43, Gly45, and Gly47 each contribute to the Ca(2+) site. His63 is an active-site residue. Asp64 is a Ca(2+) binding site. Residue Asp105 is part of the active site.

The protein belongs to the phospholipase A2 family. Group II subfamily. D49 sub-subfamily. Dimer. It depends on Ca(2+) as a cofactor. As to expression, expressed by the venom gland.

The protein localises to the secreted. The enzyme catalyses a 1,2-diacyl-sn-glycero-3-phosphocholine + H2O = a 1-acyl-sn-glycero-3-phosphocholine + a fatty acid + H(+). PLA2 catalyzes the calcium-dependent hydrolysis of the 2-acyl groups in 3-sn-phosphoglycerides. The protein is Acidic phospholipase A2 beta of Crotalus adamanteus (Eastern diamondback rattlesnake).